A 327-amino-acid polypeptide reads, in one-letter code: DNA-directed RNA polymerase subunit alpha (327 aa).

The interval 1-233 (MQNSASEFLK…DQLSIFADLQ (233 aa)) is alpha N-terminal domain (alpha-NTD). Residues 247–327 (IDPILLRPVD…NWPPAGLEKP (81 aa)) form an alpha C-terminal domain (alpha-CTD) region.

Belongs to the RNA polymerase alpha chain family. As to quaternary structure, homodimer. The RNAP catalytic core consists of 2 alpha, 1 beta, 1 beta' and 1 omega subunit. When a sigma factor is associated with the core the holoenzyme is formed, which can initiate transcription.

The catalysed reaction is RNA(n) + a ribonucleoside 5'-triphosphate = RNA(n+1) + diphosphate. DNA-dependent RNA polymerase catalyzes the transcription of DNA into RNA using the four ribonucleoside triphosphates as substrates. This chain is DNA-directed RNA polymerase subunit alpha, found in Chromobacterium violaceum (strain ATCC 12472 / DSM 30191 / JCM 1249 / CCUG 213 / NBRC 12614 / NCIMB 9131 / NCTC 9757 / MK).